The following is a 389-amino-acid chain: Sulfate adenylyltransferase (389 aa).

Belongs to the sulfate adenylyltransferase family.

It carries out the reaction sulfate + ATP + H(+) = adenosine 5'-phosphosulfate + diphosphate. It functions in the pathway sulfur metabolism; hydrogen sulfide biosynthesis; sulfite from sulfate: step 1/3. This is Sulfate adenylyltransferase from Microcystis aeruginosa (strain NIES-843 / IAM M-2473).